The chain runs to 73 residues: Neuropeptide-like protein 29 (73 aa).

A signal peptide spans 1–22; sequence MISTSSILVLVVLLACFMAASA. 5 positions are modified to tyrosine amide: tyrosine 29, tyrosine 39, tyrosine 47, tyrosine 55, and tyrosine 63. Residue tryptophan 71 is modified to Tryptophan amide.

Belongs to the YARP (YGGW-amide related peptide) family. In terms of tissue distribution, weakly or not expressed in absence of infection. Upon infection by D.coniospora, it is expressed in hypoderm. Also expressed in perivulval cells when D.coniospora spores adhere to this region. Expressed in hypodermis upon physical injury.

The protein localises to the secreted. Antimicrobial peptides that have antibacterial activity against the Gram-negative bacteria S.marcescens. Has antifungal activity against D.coniospora. May play a role in response to physical injury and osmotic stress. Through the neuropeptide receptor nlp-29, induces sleep upon activation of the innate immune response to molting and injury to the adult epidermis. The chain is Neuropeptide-like protein 29 from Caenorhabditis elegans.